The chain runs to 298 residues: Lipoyl synthase (298 aa).

Residues C40, C45, C51, C67, C71, C74, and S280 each contribute to the [4Fe-4S] cluster site. A Radical SAM core domain is found at 53–269; the sequence is AVRRTATFMI…KEIALSKGFS (217 aa).

This sequence belongs to the radical SAM superfamily. Lipoyl synthase family. [4Fe-4S] cluster is required as a cofactor.

It is found in the cytoplasm. It carries out the reaction [[Fe-S] cluster scaffold protein carrying a second [4Fe-4S](2+) cluster] + N(6)-octanoyl-L-lysyl-[protein] + 2 oxidized [2Fe-2S]-[ferredoxin] + 2 S-adenosyl-L-methionine + 4 H(+) = [[Fe-S] cluster scaffold protein] + N(6)-[(R)-dihydrolipoyl]-L-lysyl-[protein] + 4 Fe(3+) + 2 hydrogen sulfide + 2 5'-deoxyadenosine + 2 L-methionine + 2 reduced [2Fe-2S]-[ferredoxin]. Its pathway is protein modification; protein lipoylation via endogenous pathway; protein N(6)-(lipoyl)lysine from octanoyl-[acyl-carrier-protein]. Its function is as follows. Catalyzes the radical-mediated insertion of two sulfur atoms into the C-6 and C-8 positions of the octanoyl moiety bound to the lipoyl domains of lipoate-dependent enzymes, thereby converting the octanoylated domains into lipoylated derivatives. This is Lipoyl synthase from Geobacillus thermodenitrificans (strain NG80-2).